We begin with the raw amino-acid sequence, 355 residues long: Putative inositol monophosphatase 3 (355 aa).

Residues 16–36 form a helical membrane-spanning segment; the sequence is LPATIVAILLTFVLVYFLNFH. Mg(2+) is bound by residues E127, D167, L169, D170, and D292. Substrate is bound at residue E127. Substrate contacts are provided by residues 169–172 and D292; that span reads LDAT.

The protein belongs to the inositol monophosphatase superfamily. Mg(2+) is required as a cofactor.

The protein localises to the membrane. It carries out the reaction a myo-inositol phosphate + H2O = myo-inositol + phosphate. It functions in the pathway polyol metabolism; myo-inositol biosynthesis; myo-inositol from D-glucose 6-phosphate: step 2/2. The polypeptide is Putative inositol monophosphatase 3 (Drosophila melanogaster (Fruit fly)).